Reading from the N-terminus, the 198-residue chain is FMN-dependent NADH:quinone oxidoreductase (198 aa).

Residues serine 10, 16–18 (SQS), 94–97 (MYNF), and 138–141 (TRGG) each bind FMN.

This sequence belongs to the azoreductase type 1 family. As to quaternary structure, homodimer. Requires FMN as cofactor.

The enzyme catalyses 2 a quinone + NADH + H(+) = 2 a 1,4-benzosemiquinone + NAD(+). It carries out the reaction N,N-dimethyl-1,4-phenylenediamine + anthranilate + 2 NAD(+) = 2-(4-dimethylaminophenyl)diazenylbenzoate + 2 NADH + 2 H(+). In terms of biological role, quinone reductase that provides resistance to thiol-specific stress caused by electrophilic quinones. Also exhibits azoreductase activity. Catalyzes the reductive cleavage of the azo bond in aromatic azo compounds to the corresponding amines. In Shewanella oneidensis (strain ATCC 700550 / JCM 31522 / CIP 106686 / LMG 19005 / NCIMB 14063 / MR-1), this protein is FMN-dependent NADH:quinone oxidoreductase.